The primary structure comprises 220 residues: Catechol O-methyltransferase (220 aa).

S-adenosyl-L-methionine-binding positions include V44, E66, 68–69 (GT), S74, E92, and A121. An a divalent metal cation-binding site is contributed by D139. D141 contributes to the S-adenosyl-L-methionine binding site. A divalent metal cation is bound by residues D165 and N166.

It belongs to the class I-like SAM-binding methyltransferase superfamily. Cation-dependent O-methyltransferase family. Homodimer. It depends on a divalent metal cation as a cofactor.

It catalyses the reaction a catechol + S-adenosyl-L-methionine = a guaiacol + S-adenosyl-L-homocysteine + H(+). Its activity is regulated as follows. Inhibited by EDTA. Functionally, catechol O-methyltransferase that can use various catechol-like compounds such as gallic acid (GA), 3,4-dihydroxy-5-methoxy-benzoic acid (5OMeBA), protocatechuic acid (PCA), 3,4-dihydroxy-benzaldehyde (DHA), dopamine, caffeic acid (CA), luteolin, quercetin, and 5-hydroxyuridine. The sequence is that of Catechol O-methyltransferase from Mycobacterium tuberculosis (strain ATCC 25618 / H37Rv).